A 299-amino-acid chain; its full sequence is Pyridoxal 5'-phosphate synthase subunit PdxS (299 aa).

Asp29 contributes to the D-ribose 5-phosphate binding site. The active-site Schiff-base intermediate with D-ribose 5-phosphate is Lys86. Residue Gly158 participates in D-ribose 5-phosphate binding. Position 170 (Arg170) interacts with D-glyceraldehyde 3-phosphate. D-ribose 5-phosphate-binding positions include Gly219 and 240-241; that span reads GS.

It belongs to the PdxS/SNZ family. In terms of assembly, in the presence of PdxT, forms a dodecamer of heterodimers.

It catalyses the reaction aldehydo-D-ribose 5-phosphate + D-glyceraldehyde 3-phosphate + L-glutamine = pyridoxal 5'-phosphate + L-glutamate + phosphate + 3 H2O + H(+). It participates in cofactor biosynthesis; pyridoxal 5'-phosphate biosynthesis. In terms of biological role, catalyzes the formation of pyridoxal 5'-phosphate from ribose 5-phosphate (RBP), glyceraldehyde 3-phosphate (G3P) and ammonia. The ammonia is provided by the PdxT subunit. Can also use ribulose 5-phosphate and dihydroxyacetone phosphate as substrates, resulting from enzyme-catalyzed isomerization of RBP and G3P, respectively. The sequence is that of Pyridoxal 5'-phosphate synthase subunit PdxS from Mycobacterium bovis (strain ATCC BAA-935 / AF2122/97).